Here is a 384-residue protein sequence, read N- to C-terminus: MSAAIRENELLIRACILYESLDDKPIAESYKNFCRKVGKDIMTLHDFDYWFYRFHNGNHDLYHDRSKDPKPKSLSDFPIGVMYDVLGHVDPFERLVLRKVSRNLRDVVQKMRCELDALYVNKENTCISIGFGQGTITYSQVDNGCQVDQWKSSSGYKKKFVEGGDFMELFNTDFRTLLENKKVILNSFDVHHYLLARNGTNEEQFLDHLIEIIKSSNKFTTRSFGIGDLSFDKIARFLELMEPKSLEKLEIGNIIGSTDYDHLVNTEQWKTLKHFISECVEISIPIDHLLHFTTMKVDLTELTVHDALKIRDMLDTSETFDYAMIYVKMTDPIEVARVFNPEYNNDDNQNRLFYYTNPGNKKFAIGSSKSMLSISDLASDYFAD.

Residues 71–122 (PKSLSDFPIGVMYDVLGHVDPFERLVLRKVSRNLRDVVQKMRCELDALYVNK) form the F-box domain.

Belongs to the FTH family.

The sequence is that of F-box A protein 224 (fbxa-224) from Caenorhabditis elegans.